The sequence spans 526 residues: MSKAPLALLSVSNKSNIVEFAQGLIKAGFGLLSTGGTFRLLTEHNVAVTEVSDYTGFPEMMDGRVKTLHPKIHGGILGRRGTDDAVMSEHAIERIDLVVVNLYPFAETIARSDVTMNDAIENIDIGGPTMVRSAAKNHAHVGIVTDPADYTRVLEALGDGTTLTHALRYDLAVKAFEHTAQYDGMIANFLGSRVNENQEPEDFSRTFNVQLEKVQDLRYGENPHQKAAFYVENNALKSKQASIATAKQLQGKALSYNNIADTDAALECVKAFSTPACVIVKHANPCGVAVDTDQVAAYRTAFSTDPESSFGGIIAFNRPLTLAAAKAIIDNQFVEVIIAPSIEDGVLEATASKKNVRVLVCGDLPAPELRDRQLDYKRVNGGLLVQEQDLGLITANDLKIVTDVQPTEAQIADLLFSWNVAKYVKSNAIVYAKGQRTIGVGAGQMSRVNSARIAAIKAEHAGLATEGAVMASDAFFPFRDGIDNAAEVGIAAIIQPGGSMRDDETIAAANEHGIAMVFTGMRHFRH.

In terms of domain architecture, MGS-like spans 1–145 (MSKAPLALLS…KNHAHVGIVT (145 aa)).

Belongs to the PurH family.

The enzyme catalyses (6R)-10-formyltetrahydrofolate + 5-amino-1-(5-phospho-beta-D-ribosyl)imidazole-4-carboxamide = 5-formamido-1-(5-phospho-D-ribosyl)imidazole-4-carboxamide + (6S)-5,6,7,8-tetrahydrofolate. It catalyses the reaction IMP + H2O = 5-formamido-1-(5-phospho-D-ribosyl)imidazole-4-carboxamide. The protein operates within purine metabolism; IMP biosynthesis via de novo pathway; 5-formamido-1-(5-phospho-D-ribosyl)imidazole-4-carboxamide from 5-amino-1-(5-phospho-D-ribosyl)imidazole-4-carboxamide (10-formyl THF route): step 1/1. Its pathway is purine metabolism; IMP biosynthesis via de novo pathway; IMP from 5-formamido-1-(5-phospho-D-ribosyl)imidazole-4-carboxamide: step 1/1. This chain is Bifunctional purine biosynthesis protein PurH, found in Psychrobacter cryohalolentis (strain ATCC BAA-1226 / DSM 17306 / VKM B-2378 / K5).